A 188-amino-acid chain; its full sequence is Elongation factor P-like protein (188 aa).

The protein belongs to the elongation factor P family.

The polypeptide is Elongation factor P-like protein (Vibrio vulnificus (strain CMCP6)).